Reading from the N-terminus, the 93-residue chain is MFWASIGRACAIRRRARTTRSARPAEGPGQERRRFGYRRLHVLLRREGHAVNRKRVQRIYRDEQLTVRRRAPQASDGHAATVTCRWRPTSAGR.

Disordered stretches follow at residues 14-33 (RRAR…QERR) and 68-93 (RRRA…SAGR).

This chain is Insertion element ISR1 uncharacterized 11 kDa protein A1, found in Rhizobium sp.